The primary structure comprises 523 residues: Pentatricopeptide repeat-containing protein At3g21470 (523 aa).

PPR repeat units follow at residues 10–43 (GEFH…RGVY), 44–79 (FPGW…GVCS), 80–114 (DVMV…NVAT), 115–141 (WNAM…ISVC), 143–173 (NTVT…MPFE), 176–210 (NVKA…NAFV), 211–237 (WSLM…VFAR), 238–272 (DLVI…GYEP), 273–307 (DAVT…GIEL), 308–338 (NQFV…ISVR), 339–373 (SVAC…DLKP), 374–408 (DEIT…DVKP), and 409–439 (NVKH…MHVK). Positions 444–523 (VLGALLGACK…SPGLSSLVLT (80 aa)) are type E motif.

Belongs to the PPR family. PCMP-E subfamily.

This Arabidopsis thaliana (Mouse-ear cress) protein is Pentatricopeptide repeat-containing protein At3g21470 (PCMP-E29).